Consider the following 453-residue polypeptide: Macrophage scavenger receptor types I and II (453 aa).

Topologically, residues 1 to 50 (MAQWDDFPDQQEDTDSCTESVKFDARSVTALLPPHPKNGPTLQERMKSYK) are cytoplasmic. The residue at position 27 (serine 27) is a Phosphoserine. Residues 51 to 76 (TALITLYLIVFVVLVPIIGIVAAQLL) traverse the membrane as a helical; Signal-anchor for type II membrane protein segment. A spacer region spans residues 77-108 (KWETKNCTVGSVNADISPSPEGKGNGSEDEMR). At 77 to 453 (KWETKNCTVG…DEDAGVTCTT (377 aa)) the chain is on the extracellular side. N-linked (GlcNAc...) asparagine glycans are attached at residues asparagine 82, asparagine 101, asparagine 142, asparagine 183, asparagine 220, asparagine 248, and asparagine 266. Residues 194-255 (ETLNGRVQEN…LNNITNDLRL (62 aa)) adopt a coiled-coil conformation. 2 disordered regions span residues 267 to 295 (ITLLQGPPGPPGEKGDRGPPGQNGIPGFP) and 313 to 349 (PGVRGFPGPMGKTGKPGLNGQKGQKGEKGSGSMQRQS). The Collagen-like domain maps to 272–343 (GPPGPPGEKG…KGQKGEKGSG (72 aa)). The 101-residue stretch at 352-452 (VRLVGGSGPH…HDEDAGVTCT (101 aa)) folds into the SRCR domain. 3 disulfide bridges follow: cysteine 377/cysteine 441, cysteine 390/cysteine 451, and cysteine 421/cysteine 431.

In terms of assembly, homotrimer. Interacts with MYO18A.

It is found in the membrane. Its function is as follows. Membrane glycoproteins implicated in the pathologic deposition of cholesterol in arterial walls during atherogenesis. Two types of receptor subunits exist. These receptors mediate the endocytosis of a diverse group of macromolecules, including modified low density lipoproteins (LDL). This chain is Macrophage scavenger receptor types I and II (MSR1), found in Bos taurus (Bovine).